Here is a 261-residue protein sequence, read N- to C-terminus: MTHQTHAYHMVNPSPWPLTGALSALLMTSGLIMWFHYNSMSLLTLGFTTNLLTMYQWWRDVIREGTFQGHHTPIVQKGLRYGMVLFIVSEVFFFAGFFWAFYHSSLAPTPELGGCWPPTGIIPLNPLEVPLLNTSVLLASGVSITWAHHSLMEGNRKHMLQALFITISLGVYFTLLQASEYYETSFTISDGVYGSTFFMATGFHGLHVIIGSTFLIVCFLRQLYYHFTSNHHFGFEAAAWYWHFVDVVWLFLYVSIYWWGS.

Residues methionine 1–proline 15 lie on the Mitochondrial matrix side of the membrane. Residues tryptophan 16–tryptophan 34 form a helical membrane-spanning segment. Residues phenylalanine 35–methionine 40 lie on the Mitochondrial intermembrane side of the membrane. Residues serine 41–threonine 66 form a helical membrane-spanning segment. The Mitochondrial matrix segment spans residues phenylalanine 67–threonine 72. Residues proline 73 to serine 105 traverse the membrane as a helical segment. Residues leucine 106–glutamate 128 are Mitochondrial intermembrane-facing. A helical membrane pass occupies residues valine 129–methionine 152. Over glutamate 153–asparagine 155 the chain is Mitochondrial matrix. The helical transmembrane segment at arginine 156–glutamate 183 threads the bilayer. The Mitochondrial intermembrane portion of the chain corresponds to threonine 184 to aspartate 190. Residues glycine 191–leucine 223 form a helical membrane-spanning segment. The Mitochondrial matrix segment spans residues tyrosine 224–histidine 232. The helical transmembrane segment at phenylalanine 233–isoleucine 256 threads the bilayer. The Mitochondrial intermembrane portion of the chain corresponds to tyrosine 257–serine 261.

Belongs to the cytochrome c oxidase subunit 3 family. In terms of assembly, component of the cytochrome c oxidase (complex IV, CIV), a multisubunit enzyme composed of 14 subunits. The complex is composed of a catalytic core of 3 subunits MT-CO1, MT-CO2 and MT-CO3, encoded in the mitochondrial DNA, and 11 supernumerary subunits COX4I, COX5A, COX5B, COX6A, COX6B, COX6C, COX7A, COX7B, COX7C, COX8 and NDUFA4, which are encoded in the nuclear genome. The complex exists as a monomer or a dimer and forms supercomplexes (SCs) in the inner mitochondrial membrane with NADH-ubiquinone oxidoreductase (complex I, CI) and ubiquinol-cytochrome c oxidoreductase (cytochrome b-c1 complex, complex III, CIII), resulting in different assemblies (supercomplex SCI(1)III(2)IV(1) and megacomplex MCI(2)III(2)IV(2)).

It localises to the mitochondrion inner membrane. It carries out the reaction 4 Fe(II)-[cytochrome c] + O2 + 8 H(+)(in) = 4 Fe(III)-[cytochrome c] + 2 H2O + 4 H(+)(out). Component of the cytochrome c oxidase, the last enzyme in the mitochondrial electron transport chain which drives oxidative phosphorylation. The respiratory chain contains 3 multisubunit complexes succinate dehydrogenase (complex II, CII), ubiquinol-cytochrome c oxidoreductase (cytochrome b-c1 complex, complex III, CIII) and cytochrome c oxidase (complex IV, CIV), that cooperate to transfer electrons derived from NADH and succinate to molecular oxygen, creating an electrochemical gradient over the inner membrane that drives transmembrane transport and the ATP synthase. Cytochrome c oxidase is the component of the respiratory chain that catalyzes the reduction of oxygen to water. Electrons originating from reduced cytochrome c in the intermembrane space (IMS) are transferred via the dinuclear copper A center (CU(A)) of subunit 2 and heme A of subunit 1 to the active site in subunit 1, a binuclear center (BNC) formed by heme A3 and copper B (CU(B)). The BNC reduces molecular oxygen to 2 water molecules using 4 electrons from cytochrome c in the IMS and 4 protons from the mitochondrial matrix. The sequence is that of Cytochrome c oxidase subunit 3 (MT-CO3) from Canis lupus (Gray wolf).